The following is a 233-amino-acid chain: Probable cyclic nucleotide phosphodiesterase COSY_0614 (233 aa).

Positions 10, 12, 48, 78, 144, 183, and 185 each coordinate Fe cation. Residues His12, Asp48, and Asn78–His79 contribute to the AMP site. His185 provides a ligand contact to AMP.

It belongs to the cyclic nucleotide phosphodiesterase class-III family. Fe(2+) is required as a cofactor.

The polypeptide is Probable cyclic nucleotide phosphodiesterase COSY_0614 (Vesicomyosocius okutanii subsp. Calyptogena okutanii (strain HA)).